A 365-amino-acid chain; its full sequence is MDNYEFSELLKTLKNKVGNIASIIKPKNIQTRLKEIEELENSPSFWNDVKQAGIIGKEKTKITNLLKNYENAFNALNDASELFDLANSENDIETLQALFNDAPKLEDTITSLEISMLLSGENDGKNAIVSIHPGAGGTESNDWASILYRMYLRFCEREGFKVETLDFQEGEEAGLKDVSFLVKGENAYGYLKAENGIHRLVRTSPFDSAGRRHTSFSSVMVSPELDDDIEIEIEEKDIRIDYYRASGAGGQHVNKTESAVRITHFPTGIVVQCQNDRSQHKNKATAFKMLKSRLYELELMKQQDSANSSEKSEIGWGHQIRSYVLFPYQQVKDNRSGEAFSQVDNILDGDIKKMIEGVLIALKAE.

An N5-methylglutamine modification is found at Q251.

This sequence belongs to the prokaryotic/mitochondrial release factor family. Methylated by PrmC. Methylation increases the termination efficiency of RF2.

The protein localises to the cytoplasm. Its function is as follows. Peptide chain release factor 2 directs the termination of translation in response to the peptide chain termination codons UGA and UAA. The protein is Peptide chain release factor 2 of Campylobacter jejuni subsp. doylei (strain ATCC BAA-1458 / RM4099 / 269.97).